Reading from the N-terminus, the 514-residue chain is Peptide chain release factor 3 (514 aa).

A tr-type G domain is found at 8–268 (KKRRTFAIIS…TFLKFAPEPH (261 aa)). GTP-binding positions include 17 to 24 (SHPDAGKT), 85 to 89 (DTPGH), and 139 to 142 (NKLD).

This sequence belongs to the TRAFAC class translation factor GTPase superfamily. Classic translation factor GTPase family. PrfC subfamily.

Its subcellular location is the cytoplasm. In terms of biological role, increases the formation of ribosomal termination complexes and stimulates activities of RF-1 and RF-2. It binds guanine nucleotides and has strong preference for UGA stop codons. It may interact directly with the ribosome. The stimulation of RF-1 and RF-2 is significantly reduced by GTP and GDP, but not by GMP. This Streptococcus thermophilus (strain CNRZ 1066) protein is Peptide chain release factor 3.